Reading from the N-terminus, the 238-residue chain is uncharacterized protein (238 aa).

This is an uncharacterized protein from Mycobacterium tuberculosis (strain ATCC 25618 / H37Rv).